Reading from the N-terminus, the 200-residue chain is Bombinin-like peptides 3 (200 aa).

Positions 1–16 form a signal peptide, or 18; the sequence is MNFKYIVAVSILIASA. Residues F68 and F129 each carry the phenylalanine amide modification.

Belongs to the bombinin family. As to expression, expressed by the skin glands.

Its subcellular location is the secreted. Has antimicrobial activity, but no hemolytic activity. Preference on killing Gram-negative non-enteric bacteria. The protein is Bombinin-like peptides 3 of Bombina orientalis (Oriental fire-bellied toad).